The sequence spans 433 residues: Serine--tRNA ligase (433 aa).

235-237 (TSE) is an L-serine binding site. Residue 266–268 (RSE) participates in ATP binding. Glu289 is a binding site for L-serine. 353-356 (EISS) serves as a coordination point for ATP. Residue Ser388 participates in L-serine binding.

It belongs to the class-II aminoacyl-tRNA synthetase family. Type-1 seryl-tRNA synthetase subfamily. In terms of assembly, homodimer. The tRNA molecule binds across the dimer.

The protein resides in the cytoplasm. It carries out the reaction tRNA(Ser) + L-serine + ATP = L-seryl-tRNA(Ser) + AMP + diphosphate + H(+). It catalyses the reaction tRNA(Sec) + L-serine + ATP = L-seryl-tRNA(Sec) + AMP + diphosphate + H(+). It participates in aminoacyl-tRNA biosynthesis; selenocysteinyl-tRNA(Sec) biosynthesis; L-seryl-tRNA(Sec) from L-serine and tRNA(Sec): step 1/1. Catalyzes the attachment of serine to tRNA(Ser). Is also able to aminoacylate tRNA(Sec) with serine, to form the misacylated tRNA L-seryl-tRNA(Sec), which will be further converted into selenocysteinyl-tRNA(Sec). In Burkholderia ambifaria (strain ATCC BAA-244 / DSM 16087 / CCUG 44356 / LMG 19182 / AMMD) (Burkholderia cepacia (strain AMMD)), this protein is Serine--tRNA ligase.